The primary structure comprises 188 residues: GMP synthase [glutamine-hydrolyzing] subunit A (188 aa).

The Glutamine amidotransferase type-1 domain occupies 1–188; it reads MIVILNNGGQ…FCKVCGLLGE (188 aa). Cysteine 76 acts as the Nucleophile in catalysis. Catalysis depends on residues histidine 163 and glutamate 165.

In terms of assembly, heterodimer composed of a glutamine amidotransferase subunit (A) and a GMP-binding subunit (B).

The enzyme catalyses XMP + L-glutamine + ATP + H2O = GMP + L-glutamate + AMP + diphosphate + 2 H(+). It functions in the pathway purine metabolism; GMP biosynthesis; GMP from XMP (L-Gln route): step 1/1. Catalyzes the synthesis of GMP from XMP. The chain is GMP synthase [glutamine-hydrolyzing] subunit A from Methanococcus aeolicus (strain ATCC BAA-1280 / DSM 17508 / OCM 812 / Nankai-3).